The chain runs to 1041 residues: Importin-9 (1041 aa).

Alanine 2 is modified (N-acetylalanine). One can recognise an Importin N-terminal domain in the interval 43–119 (AEEQIKVLEV…RELLPNGLRE (77 aa)). The interval 936–967 (QATPAEWSQDDSNDMWEDQEEEEEEEEDGLAG) is disordered. The segment covering 943-964 (SQDDSNDMWEDQEEEEEEEEDG) has biased composition (acidic residues).

It belongs to the importin beta family. Interacts with histones H2A, H2B, H3 and H4. The binding is coupled to RanGTP cycles. Interacts with AKIRIN2; promoting association with pre-assembled proteasomes. Associates with pre-assembled proteasomes; interaction is indirect and mediated via interaction with AKIRIN2. Interacts with PPP2R1A and PPP2R1B.

It is found in the cytoplasm. The protein localises to the nucleus. In terms of biological role, nuclear transport receptor that mediates nuclear import of proteins, such as histones, proteasome and actin. Serves as receptor for nuclear localization signals (NLS) in cargo substrates. Is thought to mediate docking of the importin/substrate complex to the nuclear pore complex (NPC) through binding to nucleoporin and the complex is subsequently translocated through the pore by an energy requiring, Ran-dependent mechanism. At the nucleoplasmic side of the NPC, Ran binds to the importin, the importin/substrate complex dissociates and importin is re-exported from the nucleus to the cytoplasm where GTP hydrolysis releases Ran. The directionality of nuclear import is thought to be conferred by an asymmetric distribution of the GTP- and GDP-bound forms of Ran between the cytoplasm and nucleus. Mediates the import of pre-assembled proteasomes into the nucleus; AKIRIN2 acts as a molecular bridge between IPO9 and the proteasome complex. Mediates the nuclear import of histones H2A, H2B, H4 and H4. In addition to nuclear import, also acts as a chaperone for histones by preventing inappropriate non-nucleosomal interactions. Mediates the nuclear import of actin. This Homo sapiens (Human) protein is Importin-9.